We begin with the raw amino-acid sequence, 390 residues long: tRNA (guanine(26)-N(2))-dimethyltransferase (390 aa).

The Trm1 methyltransferase domain occupies 4-378 (HIIEEGLVKI…MPLDELKQLI (375 aa)). S-adenosyl-L-methionine contacts are provided by Arg-37, Arg-67, Asp-85, Asp-112, and Ala-113. Zn(2+)-binding residues include Cys-245, Cys-248, Cys-265, and Cys-268.

The protein belongs to the class I-like SAM-binding methyltransferase superfamily. Trm1 family.

It carries out the reaction guanosine(26) in tRNA + 2 S-adenosyl-L-methionine = N(2)-dimethylguanosine(26) in tRNA + 2 S-adenosyl-L-homocysteine + 2 H(+). Its function is as follows. Dimethylates a single guanine residue at position 26 of a number of tRNAs using S-adenosyl-L-methionine as donor of the methyl groups. In Methanosphaera stadtmanae (strain ATCC 43021 / DSM 3091 / JCM 11832 / MCB-3), this protein is tRNA (guanine(26)-N(2))-dimethyltransferase.